A 443-amino-acid polypeptide reads, in one-letter code: SAM50-like protein CG7639 (443 aa).

The POTRA domain maps to 23–101 (ARVDRVNVSG…QGYEVTFKGN (79 aa)).

This sequence belongs to the SAM50/omp85 family. In terms of assembly, associates with the mitochondrial contact site and cristae organizing system (MICOS) complex (also known as MINOS or MitOS complex).

The protein localises to the mitochondrion outer membrane. Its function is as follows. May play a role in the maintenance of the structure of mitochondrial cristae. This is SAM50-like protein CG7639 from Drosophila melanogaster (Fruit fly).